The following is a 198-amino-acid chain: Patulin synthesis protein F (198 aa).

Residues 1-18 (MRLSTVLLGSLLGALTQA) form the signal peptide. Asparagine 128 and asparagine 184 each carry an N-linked (GlcNAc...) asparagine glycan.

The protein belongs to the patF family.

Its subcellular location is the cytoplasm. The protein resides in the cytosol. The enzyme catalyses phyllostine = neopatulin. It functions in the pathway mycotoxin biosynthesis; patulin biosynthesis. Part of the gene cluster that mediates the biosynthesis of patulin, an acetate-derived tetraketide mycotoxin produced by several fungal species that shows antimicrobial properties against several bacteria. PatF catalyzes the conversion of phyllostine into neopatulin. The pathway begins with the synthesis of 6-methylsalicylic acid by the polyketide synthase (PKS) patK via condensation of acetate and malonate units. The 6-methylsalicylic acid decarboxylase patG then catalyzes the decarboxylation of 6-methylsalicylic acid to yield m-cresol (also known as 3-methylphenol). These first reactions occur in the cytosol. The intermediate m-cresol is then transported into the endoplasmic reticulum where the cytochrome P450 monooxygenase patH converts it to m-hydroxybenzyl alcohol, which is further converted to gentisyl alcohol by the cytochrome P450 monooxygenase patI. The oxidoreductases patJ and patO further convert gentisyl alcohol to isoepoxydon in the vacuole. PatN catalyzes then the transformation of isoepoxydon into phyllostine. The cluster protein patF is responsible for the conversion from phyllostine to neopatulin whereas the alcohol dehydrogenase patD converts neopatulin to E-ascladiol. The steps between isoepoxydon and E-ascladiol occur in the cytosol, and E-ascladiol is probably secreted to the extracellular space by one of the cluster-specific transporters patC or patM. Finally, the secreted patulin synthase patE catalyzes the conversion of E-ascladiol to patulin. The protein is Patulin synthesis protein F of Aspergillus clavatus (strain ATCC 1007 / CBS 513.65 / DSM 816 / NCTC 3887 / NRRL 1 / QM 1276 / 107).